Reading from the N-terminus, the 596-residue chain is mRNA export factor mex67 (596 aa).

Phosphoserine is present on residues Ser128, Ser130, and Ser133. LRR repeat units lie at residues 215-236 (DVISVSLSDNNLQSVTAVTTLA), 241-262 (KLLNLSLANNRITSLSDLDPWS), and 263-282 (PKTKLPELQELVLVGNPIVT). In terms of domain architecture, LRRCT spans 283–338 (TFANRAMDYQREMVSRFPKLRLLDGNSINSEIIASQSTVPFPVYQSFFDKVETEQI). The NTF2 domain occupies 338–499 (IVNSFLAAFF…ILIINDLLVI (162 aa)). The TAP-C domain occupies 543 to 596 (DTRQQIVLKIKAETGLNDYYAHMCCEQNNWDYNSALASFLELKSRNVIPAEAFS).

Belongs to the NXF family. Interacts with mlo3 and rae1.

It localises to the nucleus. Its subcellular location is the cytoplasm. In terms of biological role, involved in the export of mRNA from the nucleus to the cytoplasm. The polypeptide is mRNA export factor mex67 (mex67) (Schizosaccharomyces pombe (strain 972 / ATCC 24843) (Fission yeast)).